Consider the following 261-residue polypeptide: Ribonuclease PH (261 aa).

Residues arginine 87 and 125 to 127 (GTR) contribute to the phosphate site.

The protein belongs to the RNase PH family. As to quaternary structure, homohexameric ring arranged as a trimer of dimers.

It carries out the reaction tRNA(n+1) + phosphate = tRNA(n) + a ribonucleoside 5'-diphosphate. Phosphorolytic 3'-5' exoribonuclease that plays an important role in tRNA 3'-end maturation. Removes nucleotide residues following the 3'-CCA terminus of tRNAs; can also add nucleotides to the ends of RNA molecules by using nucleoside diphosphates as substrates, but this may not be physiologically important. Probably plays a role in initiation of 16S rRNA degradation (leading to ribosome degradation) during starvation. The chain is Ribonuclease PH from Thermoanaerobacter pseudethanolicus (strain ATCC 33223 / 39E) (Clostridium thermohydrosulfuricum).